We begin with the raw amino-acid sequence, 215 residues long: LysM and putative peptidoglycan-binding domain-containing protein 2 (215 aa).

Positions 1-40 (MADSSPAPSLRAGGPREPRPSAPSPPPPHSRLGSEAEEAE) are disordered. Ala2 carries the post-translational modification N-acetylalanine. A phosphoserine mark is found at Ser5, Ser24, Ser34, and Ser58. Residues 20 to 29 (PSAPSPPPPH) are compositionally biased toward pro residues. Positions 72–116 (VEHRVRAGDTLQGIALKYGVSMEQIKRANKLFTNDCIFLKKTLNI) constitute a LysM domain. The tract at residues 194–215 (AKKLKGESRDEEGLYTASLYHS) is disordered.

This is LysM and putative peptidoglycan-binding domain-containing protein 2 (LYSMD2) from Bos taurus (Bovine).